The primary structure comprises 417 residues: Blood group Rh(D) polypeptide (417 aa).

The next 11 helical transmembrane spans lie at 12–32 (CLPL…YFFT), 44–64 (LVAS…GLGF), 77–97 (VAFN…LDGF), 107–127 (VITL…LISV), 130–150 (VLGK…VTAL), 167–187 (MNMM…AWCL), 203–223 (TIPS…WPSF), 238–258 (VFNT…GSSL), 287–307 (LIPS…ISVG), 334–354 (LLGL…TVGA), and 358–378 (MIGF…VIAL).

Belongs to the ammonium transporter (TC 2.A.49) family. Rh subfamily. In terms of processing, palmitoylated. In terms of tissue distribution, restricted to tissues or cell lines expressing erythroid characters.

The protein resides in the cell membrane. Its function is as follows. May be part of an oligomeric complex which is likely to have a transport or channel function in the erythrocyte membrane. This chain is Blood group Rh(D) polypeptide (RHD), found in Homo sapiens (Human).